The chain runs to 862 residues: Probable alpha,alpha-trehalose-phosphate synthase [UDP-forming] 11 (862 aa).

Position 5 is a phosphoserine (S5). The interval 50-538 (PKRIVVSNQL…ARSYDQDLQR (489 aa)) is glycosyltransferase. The disordered stretch occupies residues 838–862 (SKHEQQKKQSKFTFQQPMGQCRKKA).

This sequence in the N-terminal section; belongs to the glycosyltransferase 20 family. It in the C-terminal section; belongs to the trehalose phosphatase family. Expressed in leaves, roots, stems and flowers.

It carries out the reaction D-glucose 6-phosphate + UDP-alpha-D-glucose = alpha,alpha-trehalose 6-phosphate + UDP + H(+). The chain is Probable alpha,alpha-trehalose-phosphate synthase [UDP-forming] 11 (TPS11) from Arabidopsis thaliana (Mouse-ear cress).